The chain runs to 179 residues: Endoribonuclease YbeY (179 aa).

Positions 148, 152, and 158 each coordinate Zn(2+).

This sequence belongs to the endoribonuclease YbeY family. Zn(2+) is required as a cofactor.

It is found in the cytoplasm. Functionally, single strand-specific metallo-endoribonuclease involved in late-stage 70S ribosome quality control and in maturation of the 3' terminus of the 16S rRNA. This chain is Endoribonuclease YbeY, found in Prochlorococcus marinus (strain AS9601).